A 329-amino-acid chain; its full sequence is Ribosomal protein L11 methyltransferase (329 aa).

Residues threonine 177, glycine 198, aspartate 220, and asparagine 264 each coordinate S-adenosyl-L-methionine.

It belongs to the methyltransferase superfamily. PrmA family.

It is found in the cytoplasm. The catalysed reaction is L-lysyl-[protein] + 3 S-adenosyl-L-methionine = N(6),N(6),N(6)-trimethyl-L-lysyl-[protein] + 3 S-adenosyl-L-homocysteine + 3 H(+). Functionally, methylates ribosomal protein L11. This is Ribosomal protein L11 methyltransferase from Helicobacter pylori (strain HPAG1).